Reading from the N-terminus, the 733-residue chain is MIVIFIFILIAVGLLSTKILHRYISIKKIPWYVYISVWIGWFMCFSIVILVPIDILCTDYRQCKHISDSQSEKLNEIITNISNGTNSGSNNNNNNNNEIINKYDSCEEPWAYISNDKLEYIYQTFYFGTLLLTWLVYPLMGSFVLAGDFHLSGRITRSIKENAYLYLIFGVIGLVVMIWLLAVKQLDWNSMVGFAMAAANTWGLCLVIILMGYGLVETPRSIWVSSQRSLVLKHLQFKAVELLNSKKKANEELIATMKVIRRIQEKTKKYDPYEKYIKIIVDQCPPEQYALVQRGEGDGEATYSVLVALNSRLKNAITNSQRAEFLYDQCLVEAFELQDIQNSAISLDKNVNWSFREQRQGRFAKKLDIMEWIWYNYLEISVFRVAAIVFAVLSLLIIWSEFALAFTSFDISVLSNIVKHSNVSNIFVQFILFFPLGYEALTCYSTLFKIRIFNYYRLIPHQHSDSNSIIFSAAYLCRLGAPLCYNFIQFINMNSGIEDNRTSFSVVMGTMNVAPFLGTYFYIYFPLLIVIVCLSTLFNVYSRIMNCLNISKFRFDVDFSHEQIDEGKFLIDSERRKWTQNNIKPLSSKSPPPSLDSTSNNPKQIFKSGSTTISKQSPPNLNVSGGNINNNNTNNGNTSSARSFIDSFLKKSSNNNNNNNNNNNPYEQTLLFDESNDFDDDDDIESGGAGRPTYNAHLSSSFNGGANSTSISGYPQINKMFGGANRYSQLPKK.

A run of 5 helical transmembrane segments spans residues Met-1 to His-21, Val-33 to Ile-53, Phe-125 to Leu-145, Ala-163 to Val-183, and Met-191 to Met-211. A coiled-coil region spans residues Leu-232 to Lys-266. Helical transmembrane passes span Ala-386 to Phe-406, Val-423 to Cys-443, Ser-468 to Ile-488, and Val-513 to Cys-533. 3 disordered regions span residues Asn-581–Ala-641, Leu-649–Gln-668, and Glu-674–Ala-696. The segment covering Asp-596–Pro-619 has biased composition (polar residues). Low complexity-rich tracts occupy residues Asn-620–Ser-640 and Asn-654–Asn-664. Positions Glu-674–Glu-685 are enriched in acidic residues.

Belongs to the LIMR family.

The protein localises to the membrane. This Dictyostelium discoideum (Social amoeba) protein is LMBR1 domain-containing protein 2 homolog A.